We begin with the raw amino-acid sequence, 379 residues long: MAPTTTATAAAEQAPPPQHTRKAVGLAAHDDSGHLTPIRISRRKTGDDDVAIKVLYCGICHSDLHTIKNEWRNAVYPVVAGHEITGVVTEVGKNVARFKAGDEVGVGCMVNTCGGCESCRDGCENYCSGGVVFTYNSVDRDGTRTYGGYSDAVVVSQRFVVRFPSSAGGGAGAALPLDSGAPLLCAGVTVYAPMRQHGLCEAGKHVGVVGLGGLGHVAVKFARAFGMRVTVISTSPVKRQEALERLGADGFIVSTNASEMKAAMGTMHGIINTASASTSMHSYLALLKPKGKMILVGLPEKPLQIPTFALVGGGKILAGSCMGSISETQEMIDFAAEHGVAADIELIGADEVNTAMERLAKGDVRYRFVVDIGNTLRSD.

Low complexity predominate over residues 1–13 (MAPTTTATAAAEQ). A disordered region spans residues 1 to 21 (MAPTTTATAAAEQAPPPQHTR). Residue C60 coordinates Zn(2+). S62 contributes to the NADP(+) binding site. Zn(2+) is bound by residues H82, E83, C113, C116, C119, C127, and C185. NADP(+) is bound by residues T189, 210–215 (GLGGLG), 233–238 (STSPVK), T273, G297, and 320–322 (SCM).

This sequence belongs to the zinc-containing alcohol dehydrogenase family. Homodimer. The cofactor is Zn(2+). Expressed in roots, first internodes and panicles. Expressed in the vascular bundles and sclerenchyma cells below the epidermis in leaves and stems.

The enzyme catalyses (E)-cinnamyl alcohol + NADP(+) = (E)-cinnamaldehyde + NADPH + H(+). It carries out the reaction (E)-coniferol + NADP(+) = (E)-coniferaldehyde + NADPH + H(+). The catalysed reaction is (E)-sinapyl alcohol + NADP(+) = (E)-sinapaldehyde + NADPH + H(+). It catalyses the reaction (E)-4-coumaroyl alcohol + NADP(+) = (E)-4-coumaraldehyde + NADPH + H(+). The enzyme catalyses (E)-caffeyl alcohol + NADP(+) = (E)-caffeyl aldehyde + NADPH + H(+). It participates in aromatic compound metabolism; phenylpropanoid biosynthesis. Functionally, involved in lignin biosynthesis. May catalyze the final step specific for the production of lignin monomers, like coniferyl alcohol, sinapyl alcohol and 4-coumaryl alcohol. The protein is Cinnamyl alcohol dehydrogenase 7 of Oryza sativa subsp. japonica (Rice).